The primary structure comprises 241 residues: MKKTKKTPTGGYGGSGSHKLYQRVKKKAGTIKASSRRWLERHLNDPYVHQSKVDGYRSRAAYKLIEMNERYKFLKKGQKIIDLGAAPGGWCQVAQRIVGSSDEKPSVVGIDYLPVVPLPGVIMLEMDFLHTDAPQKLIDALGTKPDVVLSDMAAPTTGHRQTDYLRTTYLCEVAADFALSVLKSGGHFLVKAFQGGAENTLLTTLKQNFKTVHHVKPPASRTESVELYLLALEFKAKTEVK.

Positions 88, 90, 111, 127, and 151 each coordinate S-adenosyl-L-methionine. Residue lysine 191 is the Proton acceptor of the active site.

Belongs to the class I-like SAM-binding methyltransferase superfamily. RNA methyltransferase RlmE family.

The protein resides in the cytoplasm. The enzyme catalyses uridine(2552) in 23S rRNA + S-adenosyl-L-methionine = 2'-O-methyluridine(2552) in 23S rRNA + S-adenosyl-L-homocysteine + H(+). Functionally, specifically methylates the uridine in position 2552 of 23S rRNA at the 2'-O position of the ribose in the fully assembled 50S ribosomal subunit. This chain is Ribosomal RNA large subunit methyltransferase E, found in Bartonella quintana (strain Toulouse) (Rochalimaea quintana).